A 423-amino-acid chain; its full sequence is Glucose-1-phosphate adenylyltransferase (423 aa).

Alpha-D-glucose 1-phosphate contacts are provided by residues Tyr-108, Gly-173, Glu-188 to Lys-189, and Ser-207.

This sequence belongs to the bacterial/plant glucose-1-phosphate adenylyltransferase family. In terms of assembly, homotetramer.

It carries out the reaction alpha-D-glucose 1-phosphate + ATP + H(+) = ADP-alpha-D-glucose + diphosphate. Its pathway is glycan biosynthesis; glycogen biosynthesis. Involved in the biosynthesis of ADP-glucose, a building block required for the elongation reactions to produce glycogen. Catalyzes the reaction between ATP and alpha-D-glucose 1-phosphate (G1P) to produce pyrophosphate and ADP-Glc. In Francisella tularensis subsp. mediasiatica (strain FSC147), this protein is Glucose-1-phosphate adenylyltransferase.